The chain runs to 367 residues: D-alanine--D-alanine ligase (367 aa).

One can recognise an ATP-grasp domain in the interval 141–346; that stretch reads KNLFAQAGLR…YPELIERLIA (206 aa). 174–229 lines the ATP pocket; the sequence is ERELGYPCFVKPANAGSSVGISKCKQRGDLKAAFIEAFQYDRKIIIEEAIVGREIE. Mg(2+) is bound by residues Asp300, Glu313, and Asn315.

The protein belongs to the D-alanine--D-alanine ligase family. Mg(2+) serves as cofactor. Mn(2+) is required as a cofactor.

The protein resides in the cytoplasm. The catalysed reaction is 2 D-alanine + ATP = D-alanyl-D-alanine + ADP + phosphate + H(+). It participates in cell wall biogenesis; peptidoglycan biosynthesis. In terms of biological role, cell wall formation. The polypeptide is D-alanine--D-alanine ligase (Geobacillus kaustophilus (strain HTA426)).